A 327-amino-acid chain; its full sequence is Melanoma-associated antigen B18 (327 aa).

The segment covering 1–19 (MPRGQKSKLRAREKRRQAR) has biased composition (basic residues). The interval 1–85 (MPRGQKSKLR…SSDDSEDTED (85 aa)) is disordered. The segment covering 46-70 (MPTSPNMPMGEQSTFSHSYTSTSDQ) has biased composition (polar residues). The 199-residue stretch at 91 to 289 (INHKVVLLVQ…DSFPTLYEAA (199 aa)) folds into the MAGE domain.

As to quaternary structure, interacts with LNX1. As to expression, expressed in testis, stomach, large intestine, small intestine, spleen, lymph node, bone marrow lymphocytes and blood T-lymphocytes. Not detected in brain, heart, lung, liver or kidney (at protein level).

It is found in the cytoplasm. Its function is as follows. May enhance ubiquitin ligase activity of RING-type zinc finger-containing E3 ubiquitin-protein ligases. Proposed to act through recruitment and/or stabilization of the Ubl-conjugating enzyme (E2) at the E3:substrate complex. This is Melanoma-associated antigen B18 from Mus musculus (Mouse).